The chain runs to 239 residues: Seed lectin beta chain (239 aa).

Residues Asp-88 and Gly-106 each contribute to the D-glucose site. Mn(2+) contacts are provided by Glu-126 and Asp-128. Residues Asp-128, Asn-132, and Asp-137 each coordinate Ca(2+). The Mn(2+) site is built by Asp-137 and His-142. The D-glucose site is built by Gly-217 and Ala-218.

Belongs to the leguminous lectin family. As to quaternary structure, tetramer consisting of heterodimers of alpha and beta chains.

Its function is as follows. Galactose-binding lectin. Agglutinates human erythrocytes, and requires Ca(2+) and Mn(2+) ions for full agglutinating activity. Has antifungal activity against Fusarium sp., A.niger and A.flavus. The protein is Seed lectin beta chain of Spatholobus parviflorus (Butea parviflora).